The sequence spans 498 residues: Glycerol kinase (498 aa).

Thr-13 provides a ligand contact to ADP. ATP contacts are provided by Thr-13, Thr-14, and Ser-15. Thr-13 lines the sn-glycerol 3-phosphate pocket. Arg-17 contributes to the ADP binding site. Residues Arg-83, Glu-84, Tyr-135, and Asp-244 each coordinate sn-glycerol 3-phosphate. Glycerol is bound by residues Arg-83, Glu-84, Tyr-135, Asp-244, and Gln-245. ADP is bound by residues Thr-266 and Gly-309. Positions 266, 309, 313, and 410 each coordinate ATP. ADP contacts are provided by Gly-410 and Asn-414.

It belongs to the FGGY kinase family.

It catalyses the reaction glycerol + ATP = sn-glycerol 3-phosphate + ADP + H(+). It functions in the pathway polyol metabolism; glycerol degradation via glycerol kinase pathway; sn-glycerol 3-phosphate from glycerol: step 1/1. Its activity is regulated as follows. Inhibited by fructose 1,6-bisphosphate (FBP). In terms of biological role, key enzyme in the regulation of glycerol uptake and metabolism. Catalyzes the phosphorylation of glycerol to yield sn-glycerol 3-phosphate. This chain is Glycerol kinase, found in Koribacter versatilis (strain Ellin345).